The primary structure comprises 359 residues: NF-kappa-B inhibitor beta (359 aa).

2 positions are modified to phosphoserine; by RPS6KA1: Ser-19 and Ser-23. ANK repeat units lie at residues 57–86, 93–122, and 126–155; these read DGDT…GTEY, LGQT…GVLV, and GGHT…SHPR. The tract at residues 153-194 is disordered; that stretch reads HPRDASDTYLTQSQDCTPDTSHAPAAVDSQPNPENEEEPRDE. The span at 160 to 172 shows a compositional bias: polar residues; sequence TYLTQSQDCTPDT. 3 ANK repeats span residues 206–235, 240–269, and 273–302; these read DGHT…DLNK, CGRT…DPTA, and GGRT…PEPE. A disordered region spans residues 298 to 359; it reads APEPEDEDDK…KPLPDDPNPA (62 aa). Ser-313 and Ser-318 each carry phosphoserine. The segment covering 318–331 has biased composition (acidic residues); the sequence is SDSDNRDEGDEYDD. The segment covering 344-359 has biased composition (pro residues); the sequence is PPSPASKPLPDDPNPA.

Belongs to the NF-kappa-B inhibitor family. In terms of assembly, interacts with THRB (via ligand-binding domain). Interacts with RELA and REL. Interacts with COMMD1. Interacts with inhibitor kappa B-interacting Ras-like NKIRAS1 and NKIRAS2. Phosphorylated by RPS6KA1; followed by degradation. Interaction with NKIRAS1 and NKIRAS2 probably prevents phosphorylation. As to expression, highly expressed in testis followed by spleen.

It localises to the cytoplasm. It is found in the nucleus. Functionally, inhibits NF-kappa-B by complexing with and trapping it in the cytoplasm. However, the unphosphorylated form resynthesized after cell stimulation is able to bind NF-kappa-B allowing its transport to the nucleus and protecting it to further NFKBIA-dependent inactivation. Association with inhibitor kappa B-interacting NKIRAS1 and NKIRAS2 prevent its phosphorylation rendering it more resistant to degradation, explaining its slower degradation. This Mus musculus (Mouse) protein is NF-kappa-B inhibitor beta (Nfkbib).